The primary structure comprises 236 residues: Rab-like protein 3 (236 aa).

Positions 1–236 (MASLDRVKVL…GGTLKSLHYD (236 aa)) are small GTPase-like. GTP-binding positions include 16 to 21 (GVGKSS), 148 to 150 (KLD), and 179 to 180 (DC).

It belongs to the small GTPase superfamily. Rab family. In terms of assembly, homodimer. Interacts with GPR89; the interaction stabilizes GPR89. Interacts with RAP1GDS1.

Its function is as follows. Required for KRAS signaling regulation and modulation of cell proliferation. Regulator of KRAS prenylation, and probably prenylation of other small GTPases. Required for lymphocyte development and function. Not required for myeloid cell development. The protein is Rab-like protein 3 (RABL3) of Bos taurus (Bovine).